The chain runs to 637 residues: Chaperone protein HtpG (637 aa).

Residues 1 to 334 are a; substrate-binding; it reads MQDVVNSEKL…SSDLPLNISR (334 aa). The tract at residues 335–558 is b; it reads ETLQNNKVIE…DGSMDIRMER (224 aa). Residues 559–637 are c; the sequence is FLREQKQLNY…MNNVLVKVYQ (79 aa).

Belongs to the heat shock protein 90 family. Homodimer.

It is found in the cytoplasm. In terms of biological role, molecular chaperone. Has ATPase activity. This chain is Chaperone protein HtpG, found in Ehrlichia canis (strain Jake).